A 478-amino-acid chain; its full sequence is PRAME family member 11 (478 aa).

The stretch at R99 to C126 is one LRR 1; degenerate repeat. Residues H181–N205 form an LRR 2; degenerate repeat. One copy of the LRR 3; degenerate repeat lies at L206–H232. The LRR 4; degenerate repeat unit spans residues L233–K268. LRR repeat units follow at residues L269–L294, K295–K326, T327–L347, A351–R378, and C379–H403.

Belongs to the PRAME family.

The polypeptide is PRAME family member 11 (Homo sapiens (Human)).